The sequence spans 411 residues: Anaerobic sulfatase-maturating enzyme homolog AslB (411 aa).

A Radical SAM core domain is found at 3–250; sequence QQVPTRAFHV…LVAIFDHWIK (248 aa). Residues Cys-21 and Cys-25 each coordinate [4Fe-4S] cluster. Tyr-27 contacts S-adenosyl-L-methionine. Cys-28 contributes to the [4Fe-4S] cluster binding site. The S-adenosyl-L-methionine site is built by Gly-74, Ser-129, and Arg-141. The [4Fe-4S] cluster site is built by Cys-276, Cys-282, and Cys-297. Catalysis depends on Asp-298, which acts as the Proton acceptor. [4Fe-4S] cluster contacts are provided by Cys-339, Cys-342, Cys-348, Cys-352, and Cys-371.

It belongs to the radical SAM superfamily. Anaerobic sulfatase-maturating enzyme family. Requires [4Fe-4S] cluster as cofactor.

The sequence is that of Anaerobic sulfatase-maturating enzyme homolog AslB (aslB) from Escherichia coli (strain K12).